Consider the following 266-residue polypeptide: 3-methyl-2-oxobutanoate hydroxymethyltransferase 2 (266 aa).

The Mg(2+) site is built by aspartate 45 and aspartate 84. 3-methyl-2-oxobutanoate-binding positions include 45-46 (DS), aspartate 84, and lysine 112. Residue glutamate 114 participates in Mg(2+) binding. Catalysis depends on glutamate 181, which acts as the Proton acceptor.

This sequence belongs to the PanB family. In terms of assembly, homodecamer; pentamer of dimers. Mg(2+) serves as cofactor.

It localises to the cytoplasm. The catalysed reaction is 3-methyl-2-oxobutanoate + (6R)-5,10-methylene-5,6,7,8-tetrahydrofolate + H2O = 2-dehydropantoate + (6S)-5,6,7,8-tetrahydrofolate. Its pathway is cofactor biosynthesis; (R)-pantothenate biosynthesis; (R)-pantoate from 3-methyl-2-oxobutanoate: step 1/2. Functionally, catalyzes the reversible reaction in which hydroxymethyl group from 5,10-methylenetetrahydrofolate is transferred onto alpha-ketoisovalerate to form ketopantoate. This is 3-methyl-2-oxobutanoate hydroxymethyltransferase 2 from Pseudomonas entomophila (strain L48).